A 67-amino-acid polypeptide reads, in one-letter code: Large ribosomal subunit protein bL35 (67 aa).

This sequence belongs to the bacterial ribosomal protein bL35 family.

This chain is Large ribosomal subunit protein bL35, found in Acidovorax ebreus (strain TPSY) (Diaphorobacter sp. (strain TPSY)).